A 116-amino-acid chain; its full sequence is Ribosome-binding factor A (116 aa).

It belongs to the RbfA family. In terms of assembly, monomer. Binds 30S ribosomal subunits, but not 50S ribosomal subunits or 70S ribosomes.

It is found in the cytoplasm. In terms of biological role, one of several proteins that assist in the late maturation steps of the functional core of the 30S ribosomal subunit. Associates with free 30S ribosomal subunits (but not with 30S subunits that are part of 70S ribosomes or polysomes). Required for efficient processing of 16S rRNA. May interact with the 5'-terminal helix region of 16S rRNA. The protein is Ribosome-binding factor A of Ureaplasma urealyticum serovar 10 (strain ATCC 33699 / Western).